A 228-amino-acid chain; its full sequence is Large ribosomal subunit protein uL3 (228 aa).

A disordered region spans residues Met-135 to Asp-159. Over residues Ala-140–Val-150 the composition is skewed to polar residues. An N5-methylglutamine modification is found at Gln-158.

Belongs to the universal ribosomal protein uL3 family. In terms of assembly, part of the 50S ribosomal subunit. Forms a cluster with proteins L14 and L19. Methylated by PrmB.

Functionally, one of the primary rRNA binding proteins, it binds directly near the 3'-end of the 23S rRNA, where it nucleates assembly of the 50S subunit. This Albidiferax ferrireducens (strain ATCC BAA-621 / DSM 15236 / T118) (Rhodoferax ferrireducens) protein is Large ribosomal subunit protein uL3.